A 225-amino-acid polypeptide reads, in one-letter code: Enolase-phosphatase E1 (225 aa).

The protein belongs to the HAD-like hydrolase superfamily. MasA/MtnC family. Monomer. It depends on Mg(2+) as a cofactor.

It catalyses the reaction 5-methylsulfanyl-2,3-dioxopentyl phosphate + H2O = 1,2-dihydroxy-5-(methylsulfanyl)pent-1-en-3-one + phosphate. It participates in amino-acid biosynthesis; L-methionine biosynthesis via salvage pathway; L-methionine from S-methyl-5-thio-alpha-D-ribose 1-phosphate: step 3/6. Its pathway is amino-acid biosynthesis; L-methionine biosynthesis via salvage pathway; L-methionine from S-methyl-5-thio-alpha-D-ribose 1-phosphate: step 4/6. Bifunctional enzyme that catalyzes the enolization of 2,3-diketo-5-methylthiopentyl-1-phosphate (DK-MTP-1-P) into the intermediate 2-hydroxy-3-keto-5-methylthiopentenyl-1-phosphate (HK-MTPenyl-1-P), which is then dephosphorylated to form the acireductone 1,2-dihydroxy-3-keto-5-methylthiopentene (DHK-MTPene). In Pseudomonas aeruginosa (strain LESB58), this protein is Enolase-phosphatase E1.